The following is a 494-amino-acid chain: 3-octaprenyl-4-hydroxybenzoate carboxy-lyase (494 aa).

A Mn(2+)-binding site is contributed by N172. Residues 175 to 177, 189 to 191, and 194 to 195 contribute to the prenylated FMN site; these read IYR, RWL, and RG. Residue E238 participates in Mn(2+) binding. The active-site Proton donor is D287.

This sequence belongs to the UbiD family. As to quaternary structure, homohexamer. Requires prenylated FMN as cofactor. Mn(2+) serves as cofactor.

The protein localises to the cell membrane. It carries out the reaction a 4-hydroxy-3-(all-trans-polyprenyl)benzoate + H(+) = a 2-(all-trans-polyprenyl)phenol + CO2. The protein operates within cofactor biosynthesis; ubiquinone biosynthesis. In terms of biological role, catalyzes the decarboxylation of 3-octaprenyl-4-hydroxy benzoate to 2-octaprenylphenol, an intermediate step in ubiquinone biosynthesis. The protein is 3-octaprenyl-4-hydroxybenzoate carboxy-lyase of Escherichia coli O139:H28 (strain E24377A / ETEC).